We begin with the raw amino-acid sequence, 35 residues long: Photosystem II reaction center protein T (35 aa).

A helical membrane pass occupies residues Ser3–Phe23.

It belongs to the PsbT family. In terms of assembly, PSII is composed of 1 copy each of membrane proteins PsbA, PsbB, PsbC, PsbD, PsbE, PsbF, PsbH, PsbI, PsbJ, PsbK, PsbL, PsbM, PsbT, PsbX, PsbY, PsbZ, Psb30/Ycf12, peripheral proteins PsbO, CyanoQ (PsbQ), PsbU, PsbV and a large number of cofactors. It forms dimeric complexes.

It localises to the cellular thylakoid membrane. In terms of biological role, found at the monomer-monomer interface of the photosystem II (PS II) dimer, plays a role in assembly and dimerization of PSII. PSII is a light-driven water plastoquinone oxidoreductase, using light energy to abstract electrons from H(2)O, generating a proton gradient subsequently used for ATP formation. This Nostoc sp. (strain PCC 7120 / SAG 25.82 / UTEX 2576) protein is Photosystem II reaction center protein T.